Consider the following 428-residue polypeptide: MLESLTLQPIALVNGTVNLPGSKSVSNRALLLAALAEGTTQLNNVLDSDDIRHMLNALQALGVNFRLSADRTCCEVDGLGGKLVAEQPLSLFLGNAGTAMRPLAAVLCLGNSDIVLTGEPRMKERPIGHLVDALRQGGAQIDYLEQENYPPLRLRGGFRGGELTVDGRVSSQFLTALLMTAPLAEQDTTIRIMGDLVSKPYIDITLHLMKAFGIDVGHENYQIFHIKGGQTYRSPGTYLVEGDASSASYFLAAAAIKGGTVRVTGIGKKSVQGDTKFADVLEKMGAKVTWGDDYIECSRGELQGIDMDMNHIPDAAMTIATTALFATGPTTIRNIYNWRVKETDRLTAMATELRKVGAEVEEGEDYIRVVPPVQLTAADIGTYDDHRMAMCFSLVALSDTPVTILDPKCTAKTFPDYFEQFARLSQLA.

Lys23, Ser24, and Arg28 together coordinate 3-phosphoshikimate. Lys23 contributes to the phosphoenolpyruvate binding site. Residues Gly97 and Arg125 each coordinate phosphoenolpyruvate. Residues Ser170, Ser171, Gln172, Ser198, Asp314, Asn337, and Lys341 each coordinate 3-phosphoshikimate. Gln172 is a binding site for phosphoenolpyruvate. Asp314 (proton acceptor) is an active-site residue. Arg345, Arg387, and Lys412 together coordinate phosphoenolpyruvate.

The protein belongs to the EPSP synthase family. As to quaternary structure, monomer.

It localises to the cytoplasm. It carries out the reaction 3-phosphoshikimate + phosphoenolpyruvate = 5-O-(1-carboxyvinyl)-3-phosphoshikimate + phosphate. It functions in the pathway metabolic intermediate biosynthesis; chorismate biosynthesis; chorismate from D-erythrose 4-phosphate and phosphoenolpyruvate: step 6/7. Catalyzes the transfer of the enolpyruvyl moiety of phosphoenolpyruvate (PEP) to the 5-hydroxyl of shikimate-3-phosphate (S3P) to produce enolpyruvyl shikimate-3-phosphate and inorganic phosphate. In Yersinia pseudotuberculosis serotype IB (strain PB1/+), this protein is 3-phosphoshikimate 1-carboxyvinyltransferase.